Here is a 256-residue protein sequence, read N- to C-terminus: Glycerol-3-phosphate acyltransferase (256 aa).

6 helical membrane passes run 2-22 (FPYLGIIIASIFGYLLGSVLW), 58-78 (LAVALLDGFKVLITAAFAIGL), 90-110 (SYFIPCIFVLIGHCWPIWFKF), 123-143 (LIVVNYLYFLIFFIVWWIFAF), 153-173 (IIGTATILLLMWLPWTYGVMG), and 211-231 (FADGMLTGQIVILIGMVILVV).

Belongs to the PlsY family. Probably interacts with PlsX.

It localises to the cell membrane. It carries out the reaction an acyl phosphate + sn-glycerol 3-phosphate = a 1-acyl-sn-glycero-3-phosphate + phosphate. It functions in the pathway lipid metabolism; phospholipid metabolism. Functionally, catalyzes the transfer of an acyl group from acyl-phosphate (acyl-PO(4)) to glycerol-3-phosphate (G3P) to form lysophosphatidic acid (LPA). This enzyme utilizes acyl-phosphate as fatty acyl donor, but not acyl-CoA or acyl-ACP. The protein is Glycerol-3-phosphate acyltransferase of Mesoplasma florum (strain ATCC 33453 / NBRC 100688 / NCTC 11704 / L1) (Acholeplasma florum).